A 274-amino-acid polypeptide reads, in one-letter code: Histone H1.1 (274 aa).

Disordered regions lie at residues 1-63 (MSEV…SSHP) and 129-155 (PSAS…PATV). Ser2 carries the N-acetylserine modification. Low complexity predominate over residues 16–25 (TAADAPVTDA). The segment covering 40-49 (NVKEVKEKKT) has biased composition (basic and acidic residues). The H15 domain occupies 61–130 (SHPTYEEMIK…KVKASFKLPS (70 aa)). Positions 129–145 (PSASAKASSPKAAAEKS) are enriched in low complexity. Lys161 participates in a covalent cross-link: Glycyl lysine isopeptide (Lys-Gly) (interchain with G-Cter in ubiquitin). Disordered regions lie at residues 167 to 233 (ASKA…PAKK) and 249 to 274 (KTPV…RVKK). Low complexity-rich tracts occupy residues 175–185 (AVKPKTAAAKK) and 221–233 (AAKT…PAKK).

Belongs to the histone H1/H5 family.

The protein resides in the nucleus. It localises to the chromosome. Histones H1 are necessary for the condensation of nucleosome chains into higher-order structures. The sequence is that of Histone H1.1 from Arabidopsis thaliana (Mouse-ear cress).